The chain runs to 505 residues: ATP synthase subunit alpha (505 aa).

170-177 (GDRQTGKS) provides a ligand contact to ATP.

It belongs to the ATPase alpha/beta chains family. F-type ATPases have 2 components, CF(1) - the catalytic core - and CF(0) - the membrane proton channel. CF(1) has five subunits: alpha(3), beta(3), gamma(1), delta(1), epsilon(1). CF(0) has four main subunits: a(1), b(1), b'(1) and c(9-12).

The protein resides in the cellular thylakoid membrane. The catalysed reaction is ATP + H2O + 4 H(+)(in) = ADP + phosphate + 5 H(+)(out). In terms of biological role, produces ATP from ADP in the presence of a proton gradient across the membrane. The alpha chain is a regulatory subunit. The sequence is that of ATP synthase subunit alpha from Prochlorococcus marinus (strain MIT 9215).